The sequence spans 204 residues: Recombination protein RecR (204 aa).

The segment at 58–75 (CTICQNITDVGTDPCAIC) adopts a C4-type zinc-finger fold. Residues 83–181 (TVICVVESPV…AVTKIARGIP (99 aa)) form the Toprim domain.

Belongs to the RecR family.

Its function is as follows. May play a role in DNA repair. It seems to be involved in an RecBC-independent recombinational process of DNA repair. It may act with RecF and RecO. The protein is Recombination protein RecR of Chlorobium chlorochromatii (strain CaD3).